A 510-amino-acid chain; its full sequence is Histidine ammonia-lyase (510 aa).

Positions 143–145 form a cross-link, 5-imidazolinone (Ala-Gly); the sequence is ASG. 2,3-didehydroalanine (Ser) is present on serine 144.

The protein belongs to the PAL/histidase family. In terms of processing, contains an active site 4-methylidene-imidazol-5-one (MIO), which is formed autocatalytically by cyclization and dehydration of residues Ala-Ser-Gly.

The protein localises to the cytoplasm. The catalysed reaction is L-histidine = trans-urocanate + NH4(+). It functions in the pathway amino-acid degradation; L-histidine degradation into L-glutamate; N-formimidoyl-L-glutamate from L-histidine: step 1/3. This Shewanella woodyi (strain ATCC 51908 / MS32) protein is Histidine ammonia-lyase.